Here is a 483-residue protein sequence, read N- to C-terminus: FAD-linked oxidoreductase easE (483 aa).

The 184-residue stretch at 10 to 193 (QGRLPLYSAV…TEATVRVFSD (184 aa)) folds into the FAD-binding PCMH-type domain.

It belongs to the oxygen-dependent FAD-linked oxidoreductase family. FAD is required as a cofactor.

It functions in the pathway alkaloid biosynthesis; ergot alkaloid biosynthesis. FAD-linked oxidoreductase; part of the gene cluster that mediates the biosynthesis of fungal ergot alkaloid. DmaW catalyzes the first step of ergot alkaloid biosynthesis by condensing dimethylallyl diphosphate (DMAP) and tryptophan to form 4-dimethylallyl-L-tryptophan. The second step is catalyzed by the methyltransferase easF that methylates 4-dimethylallyl-L-tryptophan in the presence of S-adenosyl-L-methionine, resulting in the formation of 4-dimethylallyl-L-abrine. The catalase easC and the FAD-dependent oxidoreductase easE then transform 4-dimethylallyl-L-abrine to chanoclavine-I which is further oxidized by easD in the presence of NAD(+), resulting in the formation of chanoclavine-I aldehyde. Agroclavine dehydrogenase easG then mediates the conversion of chanoclavine-I aldehyde to agroclavine via a non-enzymatic adduct reaction: the substrate is an iminium intermediate that is formed spontaneously from chanoclavine-I aldehyde in the presence of glutathione. The presence of easA is not required to complete this reaction. Further conversion of agroclavine to paspalic acid is a two-step process involving oxidation of agroclavine to elymoclavine and of elymoclavine to paspalic acid, the second step being performed by the elymoclavine oxidase cloA. Paspalic acid is then further converted to D-lysergic acid. Ergopeptines are assembled from D-lysergic acid and three different amino acids by the D-lysergyl-peptide-synthetases composed each of a monomudular and a trimodular nonribosomal peptide synthetase subunit. LpsB and lpsC encode the monomodular subunits responsible for D-lysergic acid activation and incorporation into the ergopeptine backbone. LpsA1 and A2 subunits encode the trimodular nonribosomal peptide synthetase assembling the tripeptide portion of ergopeptines. LpsA1 is responsible for formation of the major ergopeptine, ergotamine, and lpsA2 for alpha-ergocryptine, the minor ergopeptine of the total alkaloid mixture elaborated by C.purpurea. D-lysergyl-tripeptides are assembled by the nonribosomal peptide synthetases and released as N-(D-lysergyl-aminoacyl)-lactams. Cyclolization of the D-lysergyl-tripeptides is performed by the Fe(2+)/2-ketoglutarate-dependent dioxygenase easH which introduces a hydroxyl group into N-(D-lysergyl-aminoacyl)-lactam at alpha-C of the aminoacyl residue followed by spontaneous condensation with the terminal lactam carbonyl group. This is FAD-linked oxidoreductase easE from Claviceps purpurea (Ergot fungus).